The primary structure comprises 402 residues: MGLVSFEDVAVDFTLEEWQDLDAAQRTLYRDVMLETYSSLVFLDPCIAKPKLIFNLERGFGPWSLAEASSRSLPGVHNVSTLSDTSKKIPKTRLRQLRKTNQKTPSEDTIEAELKARQEVSKGTTSRHRRAPVKSLCRKSQRTKNQTSYNDGNLYECKDCEKVFCNNSTLIKHYRRTHNVYKPYECDECSKMYYWKSDLTSHQKTHRQRKRIYECSECGKAFFRKSHLNAHERTHSGEKPYECTECRKAFYYKSDLTRHKKTHLGEKPFKCEECKKAFSRKSKLAIHQKKHTGEKPYECTECKKAFSHQSQLTAHRIAHSSENPYECKECNKSFHWKCQLTAHQKRHTGVTYFQEVVFQQITVSDWTGNLSENGPHRPTWTWAYGIMDFVKAWSRCIIGGGL.

The KRAB domain occupies 4 to 75; sequence VSFEDVAVDF…AEASSRSLPG (72 aa). Positions 118-139 are disordered; that stretch reads QEVSKGTTSRHRRAPVKSLCRK. Over residues 125-139 the composition is skewed to basic residues; it reads TSRHRRAPVKSLCRK. C2H2-type zinc fingers lie at residues 155 to 178, 184 to 206, 213 to 235, 241 to 263, 269 to 291, 297 to 319, and 325 to 347; these read YECKDCEKVFCNNSTLIKHYRRTH, YECDECSKMYYWKSDLTSHQKTH, YECSECGKAFFRKSHLNAHERTH, YECTECRKAFYYKSDLTRHKKTH, FKCEECKKAFSRKSKLAIHQKKH, YECTECKKAFSHQSQLTAHRIAH, and YECKECNKSFHWKCQLTAHQKRH.

This sequence belongs to the krueppel C2H2-type zinc-finger protein family.

It localises to the nucleus. In terms of biological role, transcription factor specifically required to repress retrotransposons in embryonic stem cells. Recognizes and binds retroviral DNA sequences from a large subset of mammalian retroviruses and retroelements and repress their expression by recruiting a repressive complex containing TRIM28/KAP1. This chain is Zinc finger protein 809, found in Mus musculus (Mouse).